The following is a 400-amino-acid chain: MGKQQPISQRKLLGVAGLGWLFDAMDVGILSFIIAALHVEWNLSPEEMKWIGSVNSIGMAAGAFLFGLLADRIGRKKVFIITLLCFSIGSGISAFVTSLSAFLILRFVIGMGLGGELPVASTLVSEAVVPEKRGRVIVLLESFWAVGWLAAALISYFVIPSFGWQAALLLTALTAFYALYLRTSLPDSPKYESLSAKKRSMWENVKSVWARQYIRPTVMLSIVWFCVVFSYYGMFLWLPSVMLLKGFSMIQSFEYVLLMTLAQLPGYFSAAWLIEKAGRKWILVVYLIGTAGSAYFFGTADSLSLLLTAGVLLSFFNLGAWGVLYAYTPEQYPTAIRATGSGTTAAFGRIGGIFGPLLVGTLAARHISFSVIFSIFCIAILLAVACILIMGKETKQTELE.

The Cytoplasmic segment spans residues 1–14; that stretch reads MGKQQPISQRKLLG. Residues 15–35 traverse the membrane as a helical segment; it reads VAGLGWLFDAMDVGILSFIIA. At 36 to 49 the chain is on the extracellular side; sequence ALHVEWNLSPEEMK. The helical transmembrane segment at 50–70 threads the bilayer; it reads WIGSVNSIGMAAGAFLFGLLA. Residues 71–77 lie on the Cytoplasmic side of the membrane; it reads DRIGRKK. Transmembrane regions (helical) follow at residues 78-98 and 99-119; these read VFII…FVTS and LSAF…ELPV. Residues 120–142 lie on the Cytoplasmic side of the membrane; that stretch reads ASTLVSEAVVPEKRGRVIVLLES. Residues 143-163 traverse the membrane as a helical segment; the sequence is FWAVGWLAAALISYFVIPSFG. The Extracellular portion of the chain corresponds to 164–165; that stretch reads WQ. A helical membrane pass occupies residues 166 to 186; it reads AALLLTALTAFYALYLRTSLP. Residues 187-217 lie on the Cytoplasmic side of the membrane; the sequence is DSPKYESLSAKKRSMWENVKSVWARQYIRPT. Residues 218–238 traverse the membrane as a helical segment; that stretch reads VMLSIVWFCVVFSYYGMFLWL. Over 239-253 the chain is Extracellular; it reads PSVMLLKGFSMIQSF. A helical membrane pass occupies residues 254–274; the sequence is EYVLLMTLAQLPGYFSAAWLI. The Cytoplasmic segment spans residues 275–280; the sequence is EKAGRK. Residues 281–301 traverse the membrane as a helical segment; that stretch reads WILVVYLIGTAGSAYFFGTAD. The Extracellular segment spans residues 302–304; that stretch reads SLS. Residues 305 to 325 form a helical membrane-spanning segment; sequence LLLTAGVLLSFFNLGAWGVLY. Residues 326–343 are Cytoplasmic-facing; that stretch reads AYTPEQYPTAIRATGSGT. Residues 344–364 form a helical membrane-spanning segment; sequence TAAFGRIGGIFGPLLVGTLAA. The Extracellular portion of the chain corresponds to 365–370; it reads RHISFS. Residues 371-391 form a helical membrane-spanning segment; it reads VIFSIFCIAILLAVACILIMG. Over 392 to 400 the chain is Cytoplasmic; the sequence is KETKQTELE.

Belongs to the major facilitator superfamily. Sugar transporter (TC 2.A.1.1) family.

It localises to the cell membrane. Functionally, probably involved in the uptake of amidated and deamidated forms of niacin. Increases the growth rate of E.coli that is unable to make niacin de novo; confers increased sensitivity to the toxic niacin analog 6-amino-nicotinamide to wild-type E.coli. There is probably another mechanism for niacin uptake. The sequence is that of Putative niacin/nicotinamide transporter NiaP from Bacillus subtilis (strain 168).